The chain runs to 255 residues: MKRLNKLVLYISFLILVISFTAGCGIGKEAEVKKSFEKTLSMYPIKNLEDLYDKEGYRDDEFDKNDKGTWIIGSEMVVQPKGERMKSKGMVLYMNRNTKTTTGKYIVSETLHDEDGRPKSKDKEYPVKMVDNKIIPTKGIKDENIKKEIENFKFFAQYGSFKDLSKYKDGDISYNPEVPSYSAKYQLTNDDYNVKQLRKRYKIPTNKAPKLLLKGSGDLKGSSVGYKDIEFTFVEKKGENTFFTDSLHLEPSEDK.

The signal sequence occupies residues 1 to 23 (MKRLNKLVLYISFLILVISFTAG). Cysteine 24 carries N-palmitoyl cysteine lipidation. Cysteine 24 carries the S-diacylglycerol cysteine lipid modification.

Belongs to the staphylococcal tandem lipoprotein family.

The protein localises to the cell membrane. This is an uncharacterized protein from Staphylococcus aureus (strain NCTC 8325 / PS 47).